We begin with the raw amino-acid sequence, 364 residues long: Peroxidase (364 aa).

The first 20 residues, 1 to 20, serve as a signal peptide directing secretion; that stretch reads MKLSLFSTFAAVIIGALALP. Pyrrolidone carboxylic acid is present on Q21. Intrachain disulfides connect C32–C44, C43–C313, C63–C149, and C277–C342. H76 functions as the Proton acceptor in the catalytic mechanism. Residues D77, G95, D97, and S99 each coordinate Ca(2+). Residue N163 is glycosylated (N-linked (GlcNAc...) (high mannose) asparagine). A heme b-binding site is contributed by H204. The Ca(2+) site is built by S205, D222, T224, V227, and D229.

This sequence belongs to the peroxidase family. Ligninase subfamily. Ca(2+) serves as cofactor. Heme b is required as a cofactor.

The protein localises to the secreted. The enzyme catalyses 2 a phenolic donor + H2O2 = 2 a phenolic radical donor + 2 H2O. This Arthromyces ramosus protein is Peroxidase.